Consider the following 473-residue polypeptide: Maltose fermentation regulatory protein MAL63 (473 aa).

The zn(2)-C6 fungal-type DNA-binding region spans 8 to 34 (CDCCRVRRVKCDRNKPCNRCIQRNLNC). The short motif at 41 to 49 (KKRGPKSIR) is the Nuclear localization signal element.

This sequence belongs to the MAL13 family.

The protein localises to the nucleus. Regulates the coordinate transcription of structural MAL6S (maltase) and MAL6T (maltose permease) genes. The polypeptide is Maltose fermentation regulatory protein MAL63 (MAL63) (Saccharomyces cerevisiae (Baker's yeast)).